A 129-amino-acid chain; its full sequence is UPF0325 protein ECA1027 (129 aa).

It belongs to the UPF0325 family.

The sequence is that of UPF0325 protein ECA1027 from Pectobacterium atrosepticum (strain SCRI 1043 / ATCC BAA-672) (Erwinia carotovora subsp. atroseptica).